A 232-amino-acid chain; its full sequence is uncharacterized protein (232 aa).

This is an uncharacterized protein from Thermoproteus tenax (TTV1).